The sequence spans 138 residues: Probable non-specific lipid-transfer protein 1 (138 aa).

An N-terminal signal peptide occupies residues 1–36; that stretch reads MRTVSARSSVALVVIVAAVLVWTSSASVAPAPAPGS. Cystine bridges form between Cys-40–Cys-88, Cys-50–Cys-65, Cys-66–Cys-111, and Cys-86–Cys-127.

This sequence belongs to the plant LTP family.

Its function is as follows. Plant non-specific lipid-transfer proteins transfer phospholipids as well as galactolipids across membranes. May play a role in wax or cutin deposition in the cell walls of expanding epidermal cells and certain secretory tissues. This Parietaria judaica (Pellitory-of-the-wall) protein is Probable non-specific lipid-transfer protein 1.